A 749-amino-acid chain; its full sequence is Amyloid-beta A4 precursor protein-binding family A member 2 (749 aa).

2 disordered regions span residues 1–94 (MAHQ…PEEE) and 130–343 (DTDE…NNIP). Ser-11 carries the phosphoserine modification. The span at 70-80 (GDSSSDYVNNT) shows a compositional bias: polar residues. Acidic residues-rich tracts occupy residues 81-94 (SEEE…PEEE) and 131-142 (TDECQEAVEEWT). The interval 185–270 (HYCASKEGYQ…SAEACPPIKA (86 aa)) is STXBP1-binding. At Ser-208 the chain carries Phosphoserine. Residues 218–227 (DLEDQEEDID) show a composition bias toward acidic residues. Over residues 237–247 (LSMTSITSASE) the composition is skewed to polar residues. Over residues 305–315 (RTPEERPKWPH) the composition is skewed to basic and acidic residues. The PID domain maps to 366 to 555 (LIDGIIFAAN…IINTQEMYND (190 aa)). PDZ domains follow at residues 568–653 (ELQL…NIVS) and 659–735 (TVLI…MPAA).

In terms of assembly, part of a multimeric complex containing STXBP1 and syntaxin-1. Binds to the cytoplasmic domain of amyloid-beta protein, and to the nuclear factor NF-kappa-B/p65 via its PDZ domain. Interacts with the N-terminal domain of NECAB3.

Functionally, putative function in synaptic vesicle exocytosis by binding to STXBP1, an essential component of the synaptic vesicle exocytotic machinery. May modulate processing of the amyloid-beta precursor protein (APP) and hence formation of APP-beta. The protein is Amyloid-beta A4 precursor protein-binding family A member 2 (APBA2) of Pongo abelii (Sumatran orangutan).